We begin with the raw amino-acid sequence, 642 residues long: MIDSKDLATLLSLLDESDKPFETIATTFYRTFSKNDHFKVGCAIYTIIKDGFIRIPSQRLIGFYILFSLYKPDSSILSSNSLSSSSILTPSSTTTTTTTEHNNSNNNTSSPSFSSSTVPTNTTLQQNTPSSTSQAISPSSSTSSTSTSSYTNTTTNTTIPSSSPTSTTNTIIENVNDYPIAFNPFLPIFIDELEKQIDSSISSPLFNPIEKQILPLFLTNLPKDFSKKTPKEIINIGMNNTANTTTTTTTTTTTATTNITLPNISISKSSLKEYKNFYLERLPNHCFPSFRSIGISQNILFQLPSTTTTTTNTPTATTTTNTTINTQQSNPSLNTIKNHDINSEELSFFSFEPRFKRAEPPSFNPTTWINPSINHGLLLSNPMSSTVAATIAATATSAPTTILIPSPTTTTSYNSKKIVRDLMTKAIKGRLKKSQILQIKNEMDIDPKLAYYSGLTPKNLPFLVENNTQVAIDTLLKLINSPDFKDHFQTLISMEMNFRSMEVVNALATVDLPPHFIPMYITNCIDSCNNIKDKAMQQRSVRLVCVFIQSLIRNNIINIKNLFCEVQTFCLEFSKIREAISLFKAINDNNNTNNTNTNTNTNNSNTTNTNNNNNNNNNNNNNNNNLINIGEENPNLIIMATK.

Disordered stretches follow at residues 78–167 and 589–627; these read SSNS…PTST and NNNT…NNLI. Positions 589-625 are enriched in low complexity; that stretch reads NNNTNNTNTNTNTNNSNTTNTNNNNNNNNNNNNNNNN.

The protein belongs to the CNOT11 family. Component of the CCR4-NOT complex.

It localises to the cytoplasm. It is found in the nucleus. In terms of biological role, component of the CCR4-NOT complex which is one of the major cellular mRNA deadenylases and is linked to various cellular processes including bulk mRNA degradation, miRNA-mediated repression, translational repression during translational initiation and general transcription regulation. Additional complex functions may be a consequence of its influence on mRNA expression. This is CCR4-NOT transcription complex subunit 11 (cnot11) from Dictyostelium discoideum (Social amoeba).